A 147-amino-acid polypeptide reads, in one-letter code: Truncated RecQ DNA helicase-like protein C212.06c (147 aa).

Residues Met1–Met72 form the Helicase C-terminal domain. The tract at residues Glu100–Thr147 is disordered. Positions Gly125–Thr141 are enriched in low complexity.

The protein belongs to the helicase family. RecQ subfamily.

Its function is as follows. Truncated ATP-dependent 3'-5' DNA helicase. This chain is Truncated RecQ DNA helicase-like protein C212.06c, found in Schizosaccharomyces pombe (strain 972 / ATCC 24843) (Fission yeast).